The primary structure comprises 901 residues: Viral-enhancing factor (901 aa).

Residues 27 to 330 enclose the Peptidase M60 domain; it reads HRRTEVGVVL…IFTWLYNPQR (304 aa). N-linked (GlcNAc...) asparagine; by host glycosylation is found at asparagine 265, asparagine 278, asparagine 339, asparagine 349, asparagine 540, asparagine 594, asparagine 595, asparagine 642, asparagine 683, and asparagine 698.

In terms of biological role, involved in disruption of the peritrophic membrane and fusion of nucleocapsids with midgut cells. This is Viral-enhancing factor (VEF) from Pseudalatia unipuncta granulosis virus (PuGV).